The chain runs to 565 residues: Zinc finger protein 143 (565 aa).

C2H2-type zinc fingers lie at residues 230 to 254, 260 to 284, 290 to 314, 320 to 344, 350 to 374, 380 to 404, and 410 to 433; these read FRCDYEGCGKLYTTAHHLKVHERSH, YQCDHGSCRKAFATGYGLKSHVRTH, YRCSEENCTKSFKTSGDLQKHVRTH, FKCPFEGCGRSFTTSNIRKVHIRTH, YYCSEPGCGRAFASATNYKNHVRIH, YVCTVPGCDKRFTEYSSLYKHHVVH, and YNCNHCGKTYKQISTLAMHKRTAH.

The protein belongs to the GLI C2H2-type zinc-finger protein family.

It is found in the nucleus. Functionally, transcriptional activator. Activates the gene for selenocysteine tRNA (tRNAsec). Binds to the activator element (AE) motif of the selenocysteine tRNA gene promoter. This Xenopus laevis (African clawed frog) protein is Zinc finger protein 143 (znf143).